A 77-amino-acid chain; its full sequence is MNKQGLFQMEGLVIESLPNAMFRVRLQNGFVILAHISGKIRRNYIRIIVGDRVLCELTPYDLTKGRIVYRQRSTPRP.

One can recognise an S1-like domain in the interval 1 to 72; sequence MNKQGLFQME…TKGRIVYRQR (72 aa).

Belongs to the IF-1 family. As to quaternary structure, component of the 30S ribosomal translation pre-initiation complex which assembles on the 30S ribosome in the order IF-2 and IF-3, IF-1 and N-formylmethionyl-tRNA(fMet); mRNA recruitment can occur at any time during PIC assembly.

The protein resides in the plastid. It localises to the chloroplast. Its function is as follows. One of the essential components for the initiation of protein synthesis. Stabilizes the binding of IF-2 and IF-3 on the 30S subunit to which N-formylmethionyl-tRNA(fMet) subsequently binds. Helps modulate mRNA selection, yielding the 30S pre-initiation complex (PIC). Upon addition of the 50S ribosomal subunit IF-1, IF-2 and IF-3 are released leaving the mature 70S translation initiation complex. The protein is Translation initiation factor IF-1, chloroplastic of Nephroselmis olivacea (Green alga).